Reading from the N-terminus, the 332-residue chain is RNA polymerase principal sigma factor HrdD (332 aa).

The interval 1–21 (MATRAVARRQPAASGETGAAG) is disordered. A Polymerase core binding motif is present at residues 124–137 (DLIQEGNAGLVRAV). Residues 294–313 (LTEVGKQHGLTRERIRQIEK) constitute a DNA-binding region (H-T-H motif).

It belongs to the sigma-70 factor family.

Its function is as follows. Sigma factors are initiation factors that promote the attachment of RNA polymerase to specific initiation sites and are then released. This is RNA polymerase principal sigma factor HrdD (hrdD) from Streptomyces griseus.